We begin with the raw amino-acid sequence, 535 residues long: Cytochrome P450 71C3 (535 aa).

The helical transmembrane segment at 23–43 threads the bilayer; the sequence is QTLTLLLIAVPTVLLLLASLA. Position 475 (Cys475) interacts with heme.

It belongs to the cytochrome P450 family. It depends on heme as a cofactor.

Its subcellular location is the membrane. The protein operates within secondary metabolite biosynthesis; 2,4-dihydroxy-1,4-benzoxazin-3-one biosynthesis; 2,4-dihydroxy-1,4-benzoxazin-3-one from indoleglycerol phosphate: step 5/5. Functionally, catalyzes the conversion of 2-hydroxy-1,4-benzoxazin-3-one (HBOA) to 2,4-dihydroxy-1,4-benzoxazin-3-one (DIBOA). This Zea mays (Maize) protein is Cytochrome P450 71C3 (CYP71C3).